Consider the following 261-residue polypeptide: Thiazole synthase (261 aa).

Catalysis depends on K98, which acts as the Schiff-base intermediate with DXP. Residues G159, 185-186, and 207-208 each bind 1-deoxy-D-xylulose 5-phosphate; these read AG and AS.

This sequence belongs to the ThiG family. Homotetramer. Forms heterodimers with either ThiH or ThiS.

The protein resides in the cytoplasm. It catalyses the reaction [ThiS sulfur-carrier protein]-C-terminal-Gly-aminoethanethioate + 2-iminoacetate + 1-deoxy-D-xylulose 5-phosphate = [ThiS sulfur-carrier protein]-C-terminal Gly-Gly + 2-[(2R,5Z)-2-carboxy-4-methylthiazol-5(2H)-ylidene]ethyl phosphate + 2 H2O + H(+). It functions in the pathway cofactor biosynthesis; thiamine diphosphate biosynthesis. Catalyzes the rearrangement of 1-deoxy-D-xylulose 5-phosphate (DXP) to produce the thiazole phosphate moiety of thiamine. Sulfur is provided by the thiocarboxylate moiety of the carrier protein ThiS. In vitro, sulfur can be provided by H(2)S. This Mycobacterium leprae (strain Br4923) protein is Thiazole synthase.